The chain runs to 59 residues: Small EDRK-rich factor 2 (59 aa).

Composition is skewed to basic and acidic residues over residues 1–30 (MTRG…RDDG) and 50–59 (KANEKKEEPK). Positions 1–59 (MTRGNQRELARQKNMKKQSDSVKGKRRDDGLSAAARKQRDSEIMQQKQKKANEKKEEPK) are disordered.

Belongs to the SERF family.

Positive regulator of amyloid protein aggregation and proteotoxicity. Induces conformational changes in amyloid proteins, such as HTT, driving them into compact formations preceding the formation of aggregates. The polypeptide is Small EDRK-rich factor 2 (SERF2) (Plecturocebus moloch (Dusky titi monkey)).